Reading from the N-terminus, the 414-residue chain is Cytochrome c-554 (414 aa).

The N-terminal stretch at Met1–Ala24 is a signal peptide. Residues Met110, Cys131, Cys134, His135, Met154, Cys179, Cys182, His183, Met283, Cys294, Cys297, His298, Cys378, Cys381, and His382 each coordinate heme.

Post-translationally, binds 4 heme groups per subunit. In terms of processing, the N-terminus is blocked.

The protein localises to the periplasm. Its function is as follows. Serves as the immediate electron donor to the oxidized BChl2 (bacteriochlorophyll dimer) that is oxidized in the first step of light-induced charge separation. Can also oxidize low-potential substrates. The polypeptide is Cytochrome c-554 (puf2C) (Chloroflexus aurantiacus (strain ATCC 29366 / DSM 635 / J-10-fl)).